The primary structure comprises 104 residues: Large ribosomal subunit protein uL24 (104 aa).

This sequence belongs to the universal ribosomal protein uL24 family. In terms of assembly, part of the 50S ribosomal subunit.

One of two assembly initiator proteins, it binds directly to the 5'-end of the 23S rRNA, where it nucleates assembly of the 50S subunit. Its function is as follows. One of the proteins that surrounds the polypeptide exit tunnel on the outside of the subunit. The sequence is that of Large ribosomal subunit protein uL24 from Colwellia psychrerythraea (strain 34H / ATCC BAA-681) (Vibrio psychroerythus).